Consider the following 299-residue polypeptide: Transcription factor MYB17 (299 aa).

HTH myb-type domains follow at residues 9-61 and 62-116; these read KIGL…TNYL and RPDI…KKRL. 2 DNA-binding regions (H-T-H motif) span residues 37–61 and 89–112; these read WRTL…TNYL and WAAI…NTHL.

As to quaternary structure, interacts with LFY. In terms of tissue distribution, expressed in the shoot apex, young flower buds, developing carpels and siliques. Expressed in floral meristem, initiating floral primordia and developing flowers.

It is found in the nucleus. Transcription factor that may play a role in flower development by repressing ANT. Regulates the transition of meristem identity from vegetative growth to flowering. Acts downstream of LFY and upstream of AP1. Directly activates AP1 to promote floral fate. Together with LFY and AP1 may constitute a regulatory network that contributes to an abrupt and robust meristem identity transition. This Arabidopsis thaliana (Mouse-ear cress) protein is Transcription factor MYB17.